A 586-amino-acid polypeptide reads, in one-letter code: Protein CBFA2T2 (586 aa).

Residues 1–95 (MVGIPGPYQF…SSSSSLANQQ (95 aa)) are disordered. Over residues 56-68 (SSHSNGINHSPPT) the composition is skewed to polar residues. The span at 77-90 (QRSSNGPSSSSSSS) shows a compositional bias: low complexity. The region spanning 102–197 (VRQLSKLKRF…TPSQYLAQHE (96 aa)) is the TAFH domain. 2 disordered regions span residues 204 to 242 (STSS…AEPP) and 387 to 417 (IRKG…FGSR). Basic and acidic residues predominate over residues 228-237 (DRREEERETA). Over residues 399–409 (SPSSTDSGASD) the composition is skewed to low complexity. A coiled-coil region spans residues 429-481 (RKAEEAVNEVKRQAMSEVQKAVSEAEQKAFEMIASERARMEQTIVDAKRRAAE). Residues C497, C500, C508, C511, C517, C521, H529, and C533 each coordinate Zn(2+). Residues 497–533 (CWNCGRKASETCSGCNIARYCGSFCQHKDWEKHHRIC) form an MYND-type zinc finger. The interval 561 to 586 (SPTLERSSSATSRSSTPASVTAVDGL) is disordered. Over residues 566 to 586 (RSSSATSRSSTPASVTAVDGL) the composition is skewed to low complexity.

The protein localises to the nucleus. May act as a transcriptional corepressor. The sequence is that of Protein CBFA2T2 (cbfa2t2) from Xenopus laevis (African clawed frog).